Reading from the N-terminus, the 130-residue chain is Histone H2A type 1-E (130 aa).

Residues 1-22 (MSGRGKQGGKARAKAKTRSSRA) form a disordered region. Position 2 is an N-acetylserine (serine 2). Serine 2 carries the phosphoserine; by RPS6KA5 modification. Arginine 4 bears the Citrulline; alternate mark. Arginine 4 is modified (symmetric dimethylarginine; by PRMT5; alternate). Lysine 6 and lysine 10 each carry N6-(2-hydroxyisobutyryl)lysine; alternate. Lysine 6 carries the post-translational modification N6-acetyllysine; alternate. Residues 7 to 19 (QGGKARAKAKTRS) show a composition bias toward basic residues. N6-lactoyllysine; alternate is present on lysine 10. The residue at position 10 (lysine 10) is an N6-succinyllysine; alternate. Residues lysine 14 and lysine 16 each participate in a glycyl lysine isopeptide (Lys-Gly) (interchain with G-Cter in ubiquitin) cross-link. N6-(2-hydroxyisobutyryl)lysine; alternate is present on lysine 37. N6-(beta-hydroxybutyryl)lysine; alternate is present on lysine 37. Lysine 37 bears the N6-crotonyllysine; alternate mark. Lysine 75 and lysine 76 each carry N6-(2-hydroxyisobutyryl)lysine. N6-(2-hydroxyisobutyryl)lysine; alternate is present on lysine 96. Residue lysine 96 is modified to N6-succinyllysine; alternate. N6-glutaryllysine; alternate is present on lysine 96. At glutamine 105 the chain carries N5-methylglutamine. Position 119 is an N6-(2-hydroxyisobutyryl)lysine; alternate (lysine 119). 2 positions are modified to N6-crotonyllysine; alternate: lysine 119 and lysine 120. Residues lysine 119 and lysine 120 each carry the N6-glutaryllysine; alternate modification. A Glycyl lysine isopeptide (Lys-Gly) (interchain with G-Cter in ubiquitin); alternate cross-link involves residue lysine 120. Threonine 121 is subject to Phosphothreonine; by DCAF1. Residue lysine 126 is modified to N6-crotonyllysine; alternate. Lysine 126 is modified (N6-glutaryllysine; alternate).

Belongs to the histone H2A family. The nucleosome is a histone octamer containing two molecules each of H2A, H2B, H3 and H4 assembled in one H3-H4 heterotetramer and two H2A-H2B heterodimers. The octamer wraps approximately 147 bp of DNA. In terms of processing, deiminated on Arg-4 in granulocytes upon calcium entry. Monoubiquitination of Lys-120 (H2AK119Ub) by RING1, TRIM37 and RNF2/RING2 complex gives a specific tag for epigenetic transcriptional repression and participates in X chromosome inactivation of female mammals. It is involved in the initiation of both imprinted and random X inactivation. Ubiquitinated H2A is enriched in inactive X chromosome chromatin. Ubiquitination of H2A functions downstream of methylation of 'Lys-27' of histone H3 (H3K27me). H2AK119Ub by RNF2/RING2 can also be induced by ultraviolet and may be involved in DNA repair. Following DNA double-strand breaks (DSBs), it is ubiquitinated through 'Lys-63' linkage of ubiquitin moieties by the E2 ligase UBE2N and the E3 ligases RNF8 and RNF168, leading to the recruitment of repair proteins to sites of DNA damage. Ubiquitination at Lys-14 and Lys-16 (H2AK13Ub and H2AK15Ub, respectively) in response to DNA damage is initiated by RNF168 that mediates monoubiquitination at these 2 sites, and 'Lys-63'-linked ubiquitin are then conjugated to monoubiquitin; RNF8 is able to extend 'Lys-63'-linked ubiquitin chains in vitro. H2AK119Ub and ionizing radiation-induced 'Lys-63'-linked ubiquitination (H2AK13Ub and H2AK15Ub) are distinct events. Post-translationally, phosphorylation on Ser-2 (H2AS1ph) is enhanced during mitosis. Phosphorylation on Ser-2 by RPS6KA5/MSK1 directly represses transcription. Acetylation of H3 inhibits Ser-2 phosphorylation by RPS6KA5/MSK1. Phosphorylation at Thr-121 (H2AT120ph) by DCAF1 is present in the regulatory region of many tumor suppresor genes and down-regulates their transcription. In terms of processing, symmetric dimethylation on Arg-4 by the PRDM1/PRMT5 complex may play a crucial role in the germ-cell lineage. Glutamine methylation at Gln-105 (H2AQ104me) by FBL is specifically dedicated to polymerase I. It is present at 35S ribosomal DNA locus and impairs binding of the FACT complex. Post-translationally, crotonylation (Kcr) is specifically present in male germ cells and marks testis-specific genes in post-meiotic cells, including X-linked genes that escape sex chromosome inactivation in haploid cells. Crotonylation marks active promoters and enhancers and confers resistance to transcriptional repressors. It is also associated with post-meiotically activated genes on autosomes. In terms of processing, lactylated in macrophages by EP300/P300 by using lactoyl-CoA directly derived from endogenous or exogenous lactate, leading to stimulates gene transcription.

It is found in the nucleus. Its subcellular location is the chromosome. Functionally, core component of nucleosome. Nucleosomes wrap and compact DNA into chromatin, limiting DNA accessibility to the cellular machineries which require DNA as a template. Histones thereby play a central role in transcription regulation, DNA repair, DNA replication and chromosomal stability. DNA accessibility is regulated via a complex set of post-translational modifications of histones, also called histone code, and nucleosome remodeling. The sequence is that of Histone H2A type 1-E from Rattus norvegicus (Rat).